We begin with the raw amino-acid sequence, 65 residues long: Large ribosomal subunit protein bL35 (65 aa).

Positions 1–51 are disordered; that stretch reads MPKMKTNRAAAKRFKKTANGGLKSANAYTSHRFHGKTKKQRRQLRGTDMMD. Basic residues predominate over residues 31 to 44; it reads HRFHGKTKKQRRQL.

Belongs to the bacterial ribosomal protein bL35 family.

The protein is Large ribosomal subunit protein bL35 of Pediococcus pentosaceus (strain ATCC 25745 / CCUG 21536 / LMG 10740 / 183-1w).